Reading from the N-terminus, the 415-residue chain is Multidrug resistance protein MdtA (415 aa).

The N-terminal stretch at Met1–Ala21 is a signal peptide. Disordered regions lie at residues Ser32–Ala60 and Glu392–Ser415. A compositionally biased stretch (basic and acidic residues) spans Pro399–Ser415.

It belongs to the membrane fusion protein (MFP) (TC 8.A.1) family. As to quaternary structure, part of a tripartite efflux system composed of MdtA, MdtB and MdtC.

Its subcellular location is the cell inner membrane. The MdtABC tripartite complex confers resistance against novobiocin and deoxycholate. The chain is Multidrug resistance protein MdtA from Escherichia coli O81 (strain ED1a).